A 904-amino-acid chain; its full sequence is Alanine--tRNA ligase (904 aa).

Zn(2+)-binding residues include H584, H588, C687, and H691.

It belongs to the class-II aminoacyl-tRNA synthetase family. Requires Zn(2+) as cofactor.

The protein localises to the cytoplasm. It carries out the reaction tRNA(Ala) + L-alanine + ATP = L-alanyl-tRNA(Ala) + AMP + diphosphate. Functionally, catalyzes the attachment of alanine to tRNA(Ala) in a two-step reaction: alanine is first activated by ATP to form Ala-AMP and then transferred to the acceptor end of tRNA(Ala). Also edits incorrectly charged Ser-tRNA(Ala) and Gly-tRNA(Ala) via its editing domain. This is Alanine--tRNA ligase from Mycobacterium tuberculosis (strain ATCC 25177 / H37Ra).